A 281-amino-acid chain; its full sequence is Elongation factor Ts (281 aa).

Positions 80–83 are involved in Mg(2+) ion dislocation from EF-Tu; the sequence is TDFV.

Belongs to the EF-Ts family.

Its subcellular location is the cytoplasm. Functionally, associates with the EF-Tu.GDP complex and induces the exchange of GDP to GTP. It remains bound to the aminoacyl-tRNA.EF-Tu.GTP complex up to the GTP hydrolysis stage on the ribosome. In Vibrio campbellii (strain ATCC BAA-1116), this protein is Elongation factor Ts.